The sequence spans 1673 residues: MEDSDDSEAKLREEIEAELDKISISSLENDEVENDSVSDTQSDSSDTDLLELPESVLHYINVIKNKSKTAEELILQDVEDTDIFSDYKKGCNHGTVTDSHMHLRTGSLPESKANAEQLMKILSVIEKEEFMRSLAPSARCVSVREIITPDTPMDEYILPDEADLSFGYFEVEERCRKSFEAWQDKQQELEEKDKETLEAQNEREKRTFQEEDEKRQCWMRQFEVEKKHLEDLQKQDQDKMNDELHKEEKIWKEKYRQHEEHIRNLHLKMEEERTRLSELQEKEKARLFKLRYDAAVKIQATYRASVTYRKYSPIIKEQMEKKRRRAQELKEKEAKIRQKEEEKRRRLEEEQRVEEEKKKKMLEERRRREREYEEKKSILRQEREEQRSKEVIRLREHAHSPLIITCALKKGDCHGKQQAIAHVPKGKGTIAKESVDSNSKKQEDACLAQQLNKRENTHVQQLAMKKSTGIKLKPNQAILVELKMNEKNESLPKLKINENLSKNQCSEQPSDQEFNAENVDQKNELENSNLKESVNEQYPWQGLESDTQTEEHVEHVREEKVGQETEKLFGFNQEVSAEDSKQAQGVMEETREGLAEEIEIKEMTQQGGPSDENNSSPISMQKSLPSLTPDNPEPVERSVTLEEDQETDLKSERIEEIPEEGVLSCDAAVINADASVHTEGEADLQDSASGKLAPSEEAGSHSANNLLATEEVEDSPKSEIQEALEKGQQTKAEADGVLTCSVSQLTVLSSVEERRLAWVKTFKPWAEIFEQNQHKKIVKKRRLVKCPPNTMPPLDPSAILQYGPWKSLKQVPVITFQGLPGCSLSTLAECSNLQILSLRRCGLTSLQGLSHCTRLKYIDAQENHIEAISCENLENLSVVLLNNNLLTSIHGFDGCTNLQSLELSHNKITRISGLESLKYLQELTVDHNQLISTKGLCEAPTIVYLDCSHNHLTGIDGIGNCGLLQIIKLQGNYLREPPSLRNHVLLRELHLDDNSISSVEGLSSCWLPLLQYLSISQNSLATIVPLFHLVSLEKLDVSNNCLSDLTNVMCWFNACYSLRELCLTGNPVLQEINWRDSILKTLPALRVLNGDMLNSYANDRIEEHYHQDLRCLLALCQYQLQEFNLLPEKYITQKRDILTLHAVDRLSQYYKDLMKLSHECRRAHEQGDVNTTERSAAETNKNHPDFSNTDSALQNKTLHAQTNSCEADSPATSPNPLDTVFRPSTSHCEELRGRNQEKLMAHKSEQSRISSRSNSRASFIEMKMADSPMSNHHNAERSSPTKAAMVIQAQWRSYIAHRQINCSAEMHPTTTEPLQDPLINNQTTSNEERRKTNMDIQEQREKAALHIQAVWKGFILRKKLATARKAIKDEESGEEYEEIDLEDFEFDEDALEKDWPALDSTGFPSQTLPLSNQLPWPKNSRTLRHDETSPTIPVRPAQAWLCNEKENVMSSEYTQLSSRSESGILSWTPDSKTSRKNLLQSEKEEKISEEWGFKDISTAQQMLKRAKKMKSKKLRKKLEPSVRLALFKKAKNKVSVTKSSKKTQLRRDNYFEAHISSQDEEEEAVSKATAAKEKLERSQEYTYQWLHTQVGFPEATSSRNLKCNHFLPELDPDVLNGGRVQLVARLVSREDTDLDLFSMTSASALSVNKDKKSQTHRYSTGSSSKLWFPSELI.

Disordered stretches follow at residues 22–48 and 189–208; these read ISISSLENDEVENDSVSDTQSDSSDTD and LEEKDKETLEAQNEREKRTF. The LRR 1 repeat unit spans residues 34–59; that stretch reads NDSVSDTQSDSSDTDLLELPESVLHY. The LRR 2 repeat unit spans residues 216–239; the sequence is QCWMRQFEVEKKHLEDLQKQDQDK. Positions 291–320 constitute an IQ 1 domain; that stretch reads RYDAAVKIQATYRASVTYRKYSPIIKEQME. The tract at residues 324–374 is disordered; it reads RRAQELKEKEAKIRQKEEEKRRRLEEEQRVEEEKKKKMLEERRRREREYEE. The segment covering 326-374 has biased composition (basic and acidic residues); sequence AQELKEKEAKIRQKEEEKRRRLEEEQRVEEEKKKKMLEERRRREREYEE. An LRR 3 repeat occupies 491–516; the sequence is LPKLKINENLSKNQCSEQPSDQEFNA. Disordered regions lie at residues 544-658 and 679-702; these read ESDT…EEIP and EGEADLQDSASGKLAPSEEAGSHS. 2 stretches are compositionally biased toward basic and acidic residues: residues 549–567 and 588–602; these read TEEHVEHVREEKVGQETEK and EETREGLAEEIEIKE. The segment covering 603–629 has biased composition (polar residues); the sequence is MTQQGGPSDENNSSPISMQKSLPSLTP. The stretch at 641–665 is one LRR 4 repeat; that stretch reads LEEDQETDLKSERIEEIPEEGVLSC. Basic and acidic residues predominate over residues 647–656; that stretch reads TDLKSERIEE. LRR repeat units follow at residues 830 to 852, 853 to 873, 874 to 894, 895 to 919, 921 to 939, 940 to 961, 962 to 983, 984 to 1005, 1007 to 1029, 1030 to 1054, and 1067 to 1090; these read CSNLQILSLRRCGLTSLQGLSHC, TRLKYIDAQENHIEAISCENL, ENLSVVLLNNNLLTSIHGFDG, CTNLQSLELSHNKITRISGLESLKY, QELTVDHNQLISTKGLCEA, PTIVYLDCSHNHLTGIDGIGNC, GLLQIIKLQGNYLREPPSLRNH, VLLRELHLDDNSISSVEGLSSC, LPLLQYLSISQNSLATIVPLFHL, VSLEKLDVSNNCLSDLTNVMCWFNA, and PVLQEINWRDSILKTLPALRVLNG. Disordered regions lie at residues 1163-1230 and 1308-1330; these read AHEQ…HCEE and PTTTEPLQDPLINNQTTSNEERR. Polar residues-rich tracts occupy residues 1168–1226 and 1308–1325; these read DVNT…PSTS and PTTTEPLQDPLINNQTTS. 2 IQ domains span residues 1280–1309 and 1340–1369; these read PTKAAMVIQAQWRSYIAHRQINCSAEMHPT and REKAALHIQAVWKGFILRKKLATARKAIKD. An LRR 16 repeat occupies 1378 to 1405; that stretch reads EIDLEDFEFDEDALEKDWPALDSTGFPS.

This chain is Leucine-rich repeat- and IQ domain-containing protein 1 (Lrriq1), found in Mus musculus (Mouse).